The primary structure comprises 245 residues: 1-(5-phosphoribosyl)-5-[(5-phosphoribosylamino)methylideneamino] imidazole-4-carboxamide isomerase (245 aa).

The active-site Proton acceptor is the Asp8. Asp130 acts as the Proton donor in catalysis.

The protein belongs to the HisA/HisF family.

It localises to the cytoplasm. The enzyme catalyses 1-(5-phospho-beta-D-ribosyl)-5-[(5-phospho-beta-D-ribosylamino)methylideneamino]imidazole-4-carboxamide = 5-[(5-phospho-1-deoxy-D-ribulos-1-ylimino)methylamino]-1-(5-phospho-beta-D-ribosyl)imidazole-4-carboxamide. Its pathway is amino-acid biosynthesis; L-histidine biosynthesis; L-histidine from 5-phospho-alpha-D-ribose 1-diphosphate: step 4/9. The polypeptide is 1-(5-phosphoribosyl)-5-[(5-phosphoribosylamino)methylideneamino] imidazole-4-carboxamide isomerase (Marinobacter nauticus (strain ATCC 700491 / DSM 11845 / VT8) (Marinobacter aquaeolei)).